We begin with the raw amino-acid sequence, 1070 residues long: DNA-directed RNA polymerase subunit beta (1070 aa).

This sequence belongs to the RNA polymerase beta chain family. In plastids the minimal PEP RNA polymerase catalytic core is composed of four subunits: alpha, beta, beta', and beta''. When a (nuclear-encoded) sigma factor is associated with the core the holoenzyme is formed, which can initiate transcription.

It localises to the plastid. Its subcellular location is the chloroplast. It catalyses the reaction RNA(n) + a ribonucleoside 5'-triphosphate = RNA(n+1) + diphosphate. DNA-dependent RNA polymerase catalyzes the transcription of DNA into RNA using the four ribonucleoside triphosphates as substrates. The protein is DNA-directed RNA polymerase subunit beta of Illicium oligandrum (Star anise).